Consider the following 288-residue polypeptide: Polyamine aminopropyltransferase (288 aa).

The 230-residue stretch at 9 to 238 (ETLHDQFGQY…GIMTFAWATD (230 aa)) folds into the PABS domain. Residue Gln-33 participates in S-methyl-5'-thioadenosine binding. Spermidine-binding residues include His-64 and Asp-88. S-methyl-5'-thioadenosine contacts are provided by residues Glu-108 and 140–141 (DG). Asp-158 acts as the Proton acceptor in catalysis. 158 to 161 (DCTD) provides a ligand contact to spermidine. Pro-165 provides a ligand contact to S-methyl-5'-thioadenosine.

This sequence belongs to the spermidine/spermine synthase family. As to quaternary structure, homodimer or homotetramer.

The protein localises to the cytoplasm. It carries out the reaction S-adenosyl 3-(methylsulfanyl)propylamine + putrescine = S-methyl-5'-thioadenosine + spermidine + H(+). It participates in amine and polyamine biosynthesis; spermidine biosynthesis; spermidine from putrescine: step 1/1. Catalyzes the irreversible transfer of a propylamine group from the amino donor S-adenosylmethioninamine (decarboxy-AdoMet) to putrescine (1,4-diaminobutane) to yield spermidine. The protein is Polyamine aminopropyltransferase of Escherichia coli O81 (strain ED1a).